A 324-amino-acid chain; its full sequence is tRNA pseudouridine synthase B (324 aa).

Position 43 (His-43) interacts with substrate. The active-site Nucleophile is the Asp-48. Tyr-76, Tyr-179, and Leu-200 together coordinate substrate.

It belongs to the pseudouridine synthase TruB family. Type 1 subfamily.

The catalysed reaction is uridine(55) in tRNA = pseudouridine(55) in tRNA. Functionally, responsible for synthesis of pseudouridine from uracil-55 in the psi GC loop of transfer RNAs. This Yersinia pestis bv. Antiqua (strain Nepal516) protein is tRNA pseudouridine synthase B.